The primary structure comprises 531 residues: Putative heme-binding protein HQ_1094A (531 aa).

Histidine 177 contributes to the heme binding site. The interval 269 to 340 (AHGEAHGHAH…STNTNTQDSE (72 aa)) is disordered. The segment covering 271–281 (GEAHGHAHGDS) has biased composition (basic and acidic residues). A compositionally biased stretch (gly residues) spans 284–306 (GSGGGGGSSHGQSPGGASAGGSA). A compositionally biased stretch (basic and acidic residues) spans 308–317 (GTEDADHSDS). Residues 318-338 (RSTTSADTTQSDTSTNTNTQD) are compositionally biased toward low complexity. In terms of domain architecture, ABM spans 441-529 (GTMGMFYTVK…VLSERPRHVF (89 aa)).

In the N-terminal section; belongs to the ChdC family.

This chain is Putative heme-binding protein HQ_1094A, found in Haloquadratum walsbyi (strain DSM 16790 / HBSQ001).